A 930-amino-acid polypeptide reads, in one-letter code: Translation initiation factor IF-2 (930 aa).

A compositionally biased stretch (low complexity) spans Phe-50 to Val-67. Disordered stretches follow at residues Phe-50–Glu-217 and Glu-260–Pro-346. 2 stretches are compositionally biased toward basic and acidic residues: residues Ser-68 to Pro-90 and Phe-110 to Arg-125. Positions Lys-129–Arg-141 are enriched in low complexity. 2 stretches are compositionally biased toward basic and acidic residues: residues Arg-157 to Lys-167 and Val-262 to Arg-295. The span at Asn-309 to Asn-318 shows a compositional bias: low complexity. Over residues Val-337–Pro-346 the composition is skewed to basic and acidic residues. The tr-type G domain occupies Glu-432–Glu-599. The segment at Gly-441 to Thr-448 is G1. Gly-441–Thr-448 provides a ligand contact to GTP. Residues Gly-466–His-470 form a G2 region. Residues Asp-487–Gly-490 form a G3 region. Residues Asp-487–His-491 and Asn-541–Asp-544 each bind GTP. Residues Asn-541–Asp-544 are G4. The segment at Ser-577–Lys-579 is G5.

The protein belongs to the TRAFAC class translation factor GTPase superfamily. Classic translation factor GTPase family. IF-2 subfamily.

It is found in the cytoplasm. One of the essential components for the initiation of protein synthesis. Protects formylmethionyl-tRNA from spontaneous hydrolysis and promotes its binding to the 30S ribosomal subunits. Also involved in the hydrolysis of GTP during the formation of the 70S ribosomal complex. The chain is Translation initiation factor IF-2 from Streptococcus pneumoniae (strain ATCC 700669 / Spain 23F-1).